Reading from the N-terminus, the 570-residue chain is Methionine--tRNA ligase (570 aa).

A 'HIGH' region motif is present at residues 14 to 24 (PYINGIKHLGN). The Zn(2+) site is built by cysteine 146, cysteine 149, cysteine 159, and cysteine 162. Positions 347-351 (QFSTS) match the 'KMSKS' region motif. Threonine 350 is a binding site for ATP.

It belongs to the class-I aminoacyl-tRNA synthetase family. MetG type 1 subfamily. Monomer. Zn(2+) is required as a cofactor.

The protein resides in the cytoplasm. It carries out the reaction tRNA(Met) + L-methionine + ATP = L-methionyl-tRNA(Met) + AMP + diphosphate. Its function is as follows. Is required not only for elongation of protein synthesis but also for the initiation of all mRNA translation through initiator tRNA(fMet) aminoacylation. The protein is Methionine--tRNA ligase of Jannaschia sp. (strain CCS1).